A 285-amino-acid polypeptide reads, in one-letter code: Mitochondrial substrate carrier family protein L (285 aa).

The Mitochondrial intermembrane portion of the chain corresponds to 1 to 13 (MIASKETKEKIRN). 3 Solcar repeats span residues 8–94 (KEKI…VKSK), 103–185 (ISLG…AQRY), and 193–282 (MTMG…VMKF). Residues 14 to 34 (FIGGFASGAASTLAGHPFDTL) form a helical membrane-spanning segment. Topologically, residues 35–69 (KVRLQTEGSTGRFRGLAHCFTTTIKEEGFFALYKG) are mitochondrial matrix. A helical membrane pass occupies residues 70 to 90 (VTPPLLGMSIINSCMFGAMNI). The Mitochondrial intermembrane portion of the chain corresponds to 91 to 102 (VKSKIHTDKSTP). A helical transmembrane segment spans residues 103 to 123 (ISLGEIMVSGAITGWIVSFVA). Residues 124-156 (CPIETVKSKLQVQYTGVKLYNGPIDCIKKIGIR) lie on the Mitochondrial matrix side of the membrane. The chain crosses the membrane as a helical span at residues 157–177 (GLYKALIPTGFQRNSLYAYFG). Residues 178-198 (CYELAQRYLRREDGSMTMGRS) are Mitochondrial intermembrane-facing. Residues 199 to 219 (FIAGGIAGTGFWLTNFPFDVI) traverse the membrane as a helical segment. At 220 to 256 (RSRIMTMPYNESPPRYKGMIDCAKHIYRVDGLKGFWK) the chain is on the mitochondrial matrix side. Residues 257–277 (GFSPCLLRTFPANGATFVAYE) form a helical membrane-spanning segment. Topologically, residues 278–285 (CVMKFFPM) are mitochondrial intermembrane.

It belongs to the mitochondrial carrier (TC 2.A.29) family.

It localises to the mitochondrion inner membrane. Functionally, mitochondrial solute carriers shuttle metabolites, nucleotides, and cofactors through the mitochondrial inner membrane. This is Mitochondrial substrate carrier family protein L (mcfL) from Dictyostelium discoideum (Social amoeba).